A 154-amino-acid polypeptide reads, in one-letter code: UPF0039 protein sll0451 (154 aa).

Residues 8–151 form the N-acetyltransferase domain; that stretch reads QRFNDISGEA…EHISMIFRVP (144 aa).

It belongs to the UPF0039 (ElaA) family.

The polypeptide is UPF0039 protein sll0451 (Synechocystis sp. (strain ATCC 27184 / PCC 6803 / Kazusa)).